The primary structure comprises 361 residues: Chorismate synthase (361 aa).

Arginine 48 and arginine 54 together coordinate NADP(+). FMN is bound by residues 125-127, 238-239, glycine 278, 293-297, and arginine 319; these read RSS, NA, and KPTSS.

This sequence belongs to the chorismate synthase family. As to quaternary structure, homotetramer. FMNH2 is required as a cofactor.

It carries out the reaction 5-O-(1-carboxyvinyl)-3-phosphoshikimate = chorismate + phosphate. It participates in metabolic intermediate biosynthesis; chorismate biosynthesis; chorismate from D-erythrose 4-phosphate and phosphoenolpyruvate: step 7/7. Functionally, catalyzes the anti-1,4-elimination of the C-3 phosphate and the C-6 proR hydrogen from 5-enolpyruvylshikimate-3-phosphate (EPSP) to yield chorismate, which is the branch point compound that serves as the starting substrate for the three terminal pathways of aromatic amino acid biosynthesis. This reaction introduces a second double bond into the aromatic ring system. This Yersinia enterocolitica serotype O:8 / biotype 1B (strain NCTC 13174 / 8081) protein is Chorismate synthase.